The primary structure comprises 416 residues: Phosphoglycerate kinase (416 aa).

V23, D24, F25, N26, Q38, R39, S62, H63, G65, R66, L121, R122, H168, and R169 together coordinate (2R)-3-phosphoglycerate. ADP is bound at residue G212. G212 contributes to the CDP binding site. A213 and K214 together coordinate AMP. Residue A213 participates in ATP binding. A213 serves as a coordination point for Mg(2+). Mg(2+) is bound by residues A216 and D217. D217 contacts CDP. An AMP-binding site is contributed by K218. Residue K218 participates in ATP binding. An ADP-binding site is contributed by G236. G236 provides a ligand contact to CDP. AMP-binding residues include G237 and G311. ATP contacts are provided by G237 and G311. CDP contacts are provided by G336 and F341. F341 lines the ADP pocket. E342 lines the AMP pocket. 3 residues coordinate ATP: E342, D373, and T374. D373 serves as a coordination point for Mg(2+).

It belongs to the phosphoglycerate kinase family. Monomer. The cofactor is Mg(2+).

It localises to the cytoplasm. It is found in the mitochondrion. The catalysed reaction is (2R)-3-phosphoglycerate + ATP = (2R)-3-phospho-glyceroyl phosphate + ADP. It participates in carbohydrate degradation; glycolysis; pyruvate from D-glyceraldehyde 3-phosphate: step 2/5. Catalyzes one of the two ATP producing reactions in the glycolytic pathway via the reversible conversion of 1,3-diphosphoglycerate to 3-phosphoglycerate. Both L- and D- forms of purine and pyrimidine nucleotides can be used as substrates, but the activity is much lower on pyrimidines. Negatively regulates the biosynthesis of acetyl-CoA from pyruvate in the mitochondrion. This Candida glabrata (strain ATCC 2001 / BCRC 20586 / JCM 3761 / NBRC 0622 / NRRL Y-65 / CBS 138) (Yeast) protein is Phosphoglycerate kinase (PGK1).